The primary structure comprises 391 residues: Protein CAJ1 (391 aa).

Positions 4 to 73 constitute a J domain; sequence ETEYYDILGI…RSKYDQFGKE (70 aa). Residues 119–161 form a disordered region; sequence KEDEEGTAATETEKADESTDGGMVKHDTNKAESLKKDKLSKEQ. Residues 129–161 are compositionally biased toward basic and acidic residues; it reads ETEKADESTDGGMVKHDTNKAESLKKDKLSKEQ. Lys-132 participates in a covalent cross-link: Glycyl lysine isopeptide (Lys-Gly) (interchain with G-Cter in ubiquitin).

The protein is Protein CAJ1 (CAJ1) of Saccharomyces cerevisiae (strain ATCC 204508 / S288c) (Baker's yeast).